A 279-amino-acid polypeptide reads, in one-letter code: DegV domain-containing protein lin1977 (279 aa).

In terms of domain architecture, DegV spans 4-278 (IKIITDSTAG…TGAFAFMYYT (275 aa)). Residues Ser-62 and Ser-94 each contribute to the hexadecanoate site.

In terms of biological role, may bind long-chain fatty acids, such as palmitate, and may play a role in lipid transport or fatty acid metabolism. The polypeptide is DegV domain-containing protein lin1977 (Listeria innocua serovar 6a (strain ATCC BAA-680 / CLIP 11262)).